Consider the following 120-residue polypeptide: Accessory gland protein Acp53Ea (120 aa).

An N-terminal signal peptide occupies residues 1-23; it reads MKLIKVTLVFSLLALVFVAQTEA.

In terms of tissue distribution, main cells of accessory gland and seminal fluid.

It localises to the secreted. Functionally, responsible for physiological and behavioral changes in mated female flies. This is Accessory gland protein Acp53Ea (Acp53Ea) from Drosophila melanogaster (Fruit fly).